Consider the following 353-residue polypeptide: Protein RecA (353 aa).

67–74 (GPESSGKT) contacts ATP.

The protein belongs to the RecA family.

The protein localises to the cytoplasm. Can catalyze the hydrolysis of ATP in the presence of single-stranded DNA, the ATP-dependent uptake of single-stranded DNA by duplex DNA, and the ATP-dependent hybridization of homologous single-stranded DNAs. It interacts with LexA causing its activation and leading to its autocatalytic cleavage. This Chlamydia pneumoniae (Chlamydophila pneumoniae) protein is Protein RecA.